A 394-amino-acid chain; its full sequence is Chorismate synthase (394 aa).

NADP(+)-binding residues include Arg-40 and Arg-46. Residues 135–137, 255–256, Gly-302, 317–321, and Arg-343 contribute to the FMN site; these read RAS, QA, and KPISS.

Belongs to the chorismate synthase family. In terms of assembly, homotetramer. FMNH2 is required as a cofactor.

The enzyme catalyses 5-O-(1-carboxyvinyl)-3-phosphoshikimate = chorismate + phosphate. It functions in the pathway metabolic intermediate biosynthesis; chorismate biosynthesis; chorismate from D-erythrose 4-phosphate and phosphoenolpyruvate: step 7/7. Its function is as follows. Catalyzes the anti-1,4-elimination of the C-3 phosphate and the C-6 proR hydrogen from 5-enolpyruvylshikimate-3-phosphate (EPSP) to yield chorismate, which is the branch point compound that serves as the starting substrate for the three terminal pathways of aromatic amino acid biosynthesis. This reaction introduces a second double bond into the aromatic ring system. The chain is Chorismate synthase from Parafrankia sp. (strain EAN1pec).